The chain runs to 778 residues: Ral guanine nucleotide dissociation stimulator-like 2 (778 aa).

Over residues 1–15 (MLPRPLRLLLDTTPP) the composition is skewed to low complexity. A disordered region spans residues 1-59 (MLPRPLRLLLDTTPPGGVVLSSFRSRDPEEGGDPGGRAVGGGQEEEDEEEEEASVSVWD). The span at 33–42 (DPGGRAVGGG) shows a compositional bias: gly residues. Residues 43–59 (QEEEDEEEEEASVSVWD) show a composition bias toward acidic residues. Residues 88 to 212 (SSRRLRAGTL…GSADLIRNLR (125 aa)) enclose the N-terminal Ras-GEF domain. The region spanning 243–513 (LADHLAEQLT…HRVSCEVEPP (271 aa)) is the Ras-GEF domain. 4 disordered regions span residues 503–524 (SHRV…ARTP), 541–564 (GGPT…GTPA), 581–647 (SLDS…GPGS), and 735–769 (RRPS…IKAT). Low complexity predominate over residues 581-592 (SLDSALESSPSL). Positions 620–632 (CGSPLSGNTGEGT) are enriched in polar residues. The Ras-associating domain maps to 649–736 (DCRIIRVQME…HDFLLRQRRR (88 aa)). Over residues 738–756 (SAATPGSHSGPSASGTPPS) the composition is skewed to low complexity.

As to quaternary structure, interacts with SAMD9.

Functionally, probable guanine nucleotide exchange factor. Putative effector of Ras and/or Rap. Associates with the GTP-bound form of Rap 1A and H-Ras in vitro. In Mus musculus (Mouse), this protein is Ral guanine nucleotide dissociation stimulator-like 2 (Rgl2).